The primary structure comprises 427 residues: Probable G-protein coupled receptor 150 (427 aa).

Residues 1 to 3 are Extracellular-facing; it reads MED. The helical transmembrane segment at 4–24 threads the bilayer; the sequence is PFSLAILNPASNLSVPTQPSW. Residues 25-50 are Cytoplasmic-facing; sequence SLNLTSEQGASVPGPHSPPRGPPSHR. The chain crosses the membrane as a helical span at residues 51–71; that stretch reads IHLVFLGIILVAAVAGNTTVL. Residues 72–89 are Extracellular-facing; it reads CRLCGGSSGPWPGPKRRK. A helical transmembrane segment spans residues 90–110; it reads MDFLLVQLAAADLYASGGTAL. Residues 111–170 lie on the Cytoplasmic side of the membrane; that stretch reads SQLAWELLGDPRPALGDLACRLSHLLQASGRGASAHLVALIALERQLAVRIPQGPQLPAR. The chain crosses the membrane as a helical span at residues 171–191; the sequence is ALAALSWLLALLLALPPTFVV. Over 192-230 the chain is Extracellular; that stretch reads RWDAPPSSTANAWPGKHCCRGIFAPLPRWHLQVYALYEA. Residues 231 to 251 form a helical membrane-spanning segment; that stretch reads IVGFAAPVALLGFSCGHLLCV. Topologically, residues 252-286 are cytoplasmic; it reads WWQRGSQAPVARMPWSPSMARASLPSALPQAKVQS. A helical membrane pass occupies residues 287 to 307; that stretch reads LKMSLALALLFVGCDLPYFAA. Residues 308–327 are Extracellular-facing; that stretch reads RLAAAWSSKPAGDWERESLV. The chain crosses the membrane as a helical span at residues 328–348; the sequence is AAMRVLEVANSAINPLIYLFF. The Cytoplasmic segment spans residues 349–427; that stretch reads QAGDCRLWRR…PPPCSCESAF (79 aa). Residues 402 to 427 are disordered; that stretch reads EERNQGCLRPPPPRPRPPPCSCESAF. Pro residues predominate over residues 410–421; sequence RPPPPRPRPPPC.

This sequence belongs to the G-protein coupled receptor 1 family.

The protein localises to the cell membrane. Functionally, orphan receptor. This Mus musculus (Mouse) protein is Probable G-protein coupled receptor 150 (Gpr150).